A 349-amino-acid polypeptide reads, in one-letter code: Magnesium-protoporphyrin IX monomethyl ester [oxidative] cyclase (349 aa).

It belongs to the AcsF family. Fe cation serves as cofactor.

It is found in the plastid. It localises to the chloroplast. It catalyses the reaction Mg-protoporphyrin IX 13-monomethyl ester + 3 NADPH + 3 O2 + 2 H(+) = 3,8-divinyl protochlorophyllide a + 3 NADP(+) + 5 H2O. It functions in the pathway porphyrin-containing compound metabolism; chlorophyll biosynthesis (light-independent). Functionally, catalyzes the formation of the isocyclic ring in chlorophyll biosynthesis. Mediates the cyclase reaction, which results in the formation of divinylprotochlorophyllide (Pchlide) characteristic of all chlorophylls from magnesium-protoporphyrin IX 13-monomethyl ester (MgPMME). The chain is Magnesium-protoporphyrin IX monomethyl ester [oxidative] cyclase from Porphyra purpurea (Red seaweed).